A 150-amino-acid chain; its full sequence is Nucleoside diphosphate kinase (150 aa).

Residues Lys10, Phe58, Arg86, Thr92, Arg103, and Asn113 each contribute to the ATP site. Catalysis depends on His116, which acts as the Pros-phosphohistidine intermediate.

Belongs to the NDK family. As to quaternary structure, homohexamer. Mg(2+) is required as a cofactor.

It carries out the reaction a 2'-deoxyribonucleoside 5'-diphosphate + ATP = a 2'-deoxyribonucleoside 5'-triphosphate + ADP. It catalyses the reaction a ribonucleoside 5'-diphosphate + ATP = a ribonucleoside 5'-triphosphate + ADP. Functionally, major role in the synthesis of nucleoside triphosphates other than ATP. The ATP gamma phosphate is transferred to the NDP beta phosphate via a ping-pong mechanism, using a phosphorylated active-site intermediate. This chain is Nucleoside diphosphate kinase (awd), found in Drosophila yakuba (Fruit fly).